A 332-amino-acid chain; its full sequence is Malate dehydrogenase 1, cytoplasmic (332 aa).

NAD(+)-binding positions include 16–17 (QI) and aspartate 43. At methionine 56 the chain carries Methionine sulfoxide. An NAD(+)-binding site is contributed by glycine 90. The residue at position 97 (methionine 97) is a Methionine sulfoxide. Arginine 99 provides a ligand contact to oxaloacetate. Glutamine 113 provides a ligand contact to NAD(+). A Glycyl lysine isopeptide (Lys-Gly) (interchain with G-Cter in ubiquitin) cross-link involves residue lysine 119. Asparagine 132 lines the NAD(+) pocket. Residues asparagine 132, arginine 163, histidine 188, and serine 243 each contribute to the oxaloacetate site. Histidine 188 acts as the Proton acceptor in catalysis.

Belongs to the LDH/MDH superfamily. MDH type 2 family. Forms a homodimer. Forms a disulfide-linked homodimer upon oxidation. Interacts with 14-3-3-like proteins GRF1 GRF3 and GRF8. Interacts with TRX1, TRX2, TRX3, TRX4 and TRX5. As to expression, expressed in rosette leaves.

The protein localises to the cytoplasm. It catalyses the reaction (S)-malate + NAD(+) = oxaloacetate + NADH + H(+). With respect to regulation, decreased activity upon treatment with hydrogen peroxide. Catalyzes a reversible NAD-dependent dehydrogenase reaction involved in central metabolism and redox homeostasis between organellar compartments. This Arabidopsis thaliana (Mouse-ear cress) protein is Malate dehydrogenase 1, cytoplasmic (MDH1).